A 222-amino-acid polypeptide reads, in one-letter code: GTP cyclohydrolase 1 (222 aa).

Zn(2+)-binding residues include C111, H114, and C182.

Belongs to the GTP cyclohydrolase I family. As to quaternary structure, toroid-shaped homodecamer, composed of two pentamers of five dimers.

The enzyme catalyses GTP + H2O = 7,8-dihydroneopterin 3'-triphosphate + formate + H(+). The protein operates within cofactor biosynthesis; 7,8-dihydroneopterin triphosphate biosynthesis; 7,8-dihydroneopterin triphosphate from GTP: step 1/1. The protein is GTP cyclohydrolase 1 of Klebsiella pneumoniae subsp. pneumoniae (strain ATCC 700721 / MGH 78578).